A 459-amino-acid polypeptide reads, in one-letter code: uncharacterized protein (459 aa).

Positions 28-47 (AHDEELTGPPQKPAYAAKPA) are disordered. Positions 35–214 (GPPQKPAYAA…TEVIVKLHPR (180 aa)) constitute an FAD-binding PCMH-type domain.

This sequence belongs to the oxygen-dependent FAD-linked oxidoreductase family. It depends on FAD as a cofactor.

This is an uncharacterized protein from Mycobacterium tuberculosis (strain CDC 1551 / Oshkosh).